The chain runs to 305 residues: Acetyl-coenzyme A carboxylase carboxyl transferase subunit alpha (305 aa).

A CoA carboxyltransferase C-terminal domain is found at 33–280 (AKLESSTALS…KEQILKDLAD (248 aa)).

It belongs to the AccA family. Acetyl-CoA carboxylase is a heterohexamer composed of biotin carboxyl carrier protein (AccB), biotin carboxylase (AccC) and two subunits each of ACCase subunit alpha (AccA) and ACCase subunit beta (AccD).

It is found in the cytoplasm. It carries out the reaction N(6)-carboxybiotinyl-L-lysyl-[protein] + acetyl-CoA = N(6)-biotinyl-L-lysyl-[protein] + malonyl-CoA. It functions in the pathway lipid metabolism; malonyl-CoA biosynthesis; malonyl-CoA from acetyl-CoA: step 1/1. In terms of biological role, component of the acetyl coenzyme A carboxylase (ACC) complex. First, biotin carboxylase catalyzes the carboxylation of biotin on its carrier protein (BCCP) and then the CO(2) group is transferred by the carboxyltransferase to acetyl-CoA to form malonyl-CoA. The protein is Acetyl-coenzyme A carboxylase carboxyl transferase subunit alpha of Treponema denticola (strain ATCC 35405 / DSM 14222 / CIP 103919 / JCM 8153 / KCTC 15104).